Here is a 99-residue protein sequence, read N- to C-terminus: MNTIQVIIFAVVLVLTVTVGQADEDSPEASLLRKLKEAEASLFGQNLEESRNSRQKRCGGVDAPCDKDRPDCCSYAECLRPSGYGWWHGTYYCYRKRER.

Residues 1–22 (MNTIQVIIFAVVLVLTVTVGQA) form the signal peptide. The propeptide occupies 23–57 (DEDSPEASLLRKLKEAEASLFGQNLEESRNSRQKR). Intrachain disulfides connect Cys-58–Cys-73, Cys-65–Cys-78, and Cys-72–Cys-93.

This sequence belongs to the neurotoxin 14 (magi-1) family. 08 (Ltx-4) subfamily. Expressed by the venom gland.

Its subcellular location is the secreted. Its function is as follows. Insecticidal neurotoxin. This Lasiodora sp. (strain IBSP 8539) (Brazilian salmon pink birdeater) protein is U2-theraphotoxin-Lsp1a.